A 1053-amino-acid chain; its full sequence is DNA-directed RNA polymerase subunit beta' (1053 aa).

Positions 60, 62, 75, and 78 each coordinate Zn(2+). Mg(2+) contacts are provided by Asp-449, Asp-451, and Asp-453.

This sequence belongs to the RNA polymerase beta' chain family. In terms of assembly, the RNAP catalytic core consists of 2 alpha, 1 beta, 1 beta' and 1 omega subunit. When a sigma factor is associated with the core the holoenzyme is formed, which can initiate transcription. It depends on Mg(2+) as a cofactor. Requires Zn(2+) as cofactor.

The enzyme catalyses RNA(n) + a ribonucleoside 5'-triphosphate = RNA(n+1) + diphosphate. Its function is as follows. DNA-dependent RNA polymerase catalyzes the transcription of DNA into RNA using the four ribonucleoside triphosphates as substrates. This chain is DNA-directed RNA polymerase subunit beta', found in Brochothrix thermosphacta (Microbacterium thermosphactum).